The sequence spans 92 residues: Small ribosomal subunit protein uS19 (92 aa).

This sequence belongs to the universal ribosomal protein uS19 family.

Protein S19 forms a complex with S13 that binds strongly to the 16S ribosomal RNA. The protein is Small ribosomal subunit protein uS19 of Francisella philomiragia subsp. philomiragia (strain ATCC 25017 / CCUG 19701 / FSC 153 / O#319-036).